The chain runs to 1322 residues: Centrosome-associated protein Alms1a (1322 aa).

Disordered regions lie at residues 1–26 (MRAK…ESSR), 53–135 (TASS…SEVT), 165–193 (SQSA…SVLK), 252–442 (EEPS…NSVY), 464–614 (KHNQ…GSRP), 657–752 (ESST…ASTD), 814–844 (SKSQ…KERP), 856–911 (AEAE…LNQR), and 1083–1109 (ASAT…SSMM). Low complexity predominate over residues 53 to 62 (TASSGASGST). The segment covering 78-111 (MEHESRPESGHRRRTKSSDHRSPDERGEAKEQLR) has biased composition (basic and acidic residues). Over residues 165–189 (SQSAEDIRTPTKSPQMQNKKTQTPE) the composition is skewed to polar residues. Low complexity predominate over residues 279–292 (SLNSGMESSLSSNK). Residues 309–318 (EVSSCQTDCR) are compositionally biased toward polar residues. The span at 319–330 (SSSQKESTQGSS) shows a compositional bias: low complexity. The span at 338–350 (NFTTEGTQCSYNR) shows a compositional bias: polar residues. The segment covering 354 to 364 (EIDSIMEEEES) has biased composition (acidic residues). Basic and acidic residues-rich tracts occupy residues 365–375 (IDRRKKDDLRI) and 394–408 (SRRE…DDSR). The span at 409 to 430 (LNSPNSSRLGSEVSSRVESSRS) shows a compositional bias: low complexity. Basic and acidic residues-rich tracts occupy residues 464–487 (KHNQ…EQHQ), 495–512 (PKGR…REQQ), and 519–538 (RDQR…EREQ). Composition is skewed to low complexity over residues 594 to 605 (STGVTASTSTTS) and 657 to 669 (ESST…SSSS). Positions 678-696 (GSLQQVAATNTNQSNARSS) are enriched in polar residues. Residues 714–735 (AIGSSSPLPESVSYSGSTSGSG) show a composition bias toward low complexity. 2 stretches are compositionally biased toward polar residues: residues 737–751 (VITQ…NAST) and 822–832 (TESATAAQIPS). Over residues 893–907 (LPAPPPTQPPPPPPH) the composition is skewed to pro residues. Over residues 1092–1107 (SAITRSTTTTTNSSSS) the composition is skewed to low complexity. The interval 1115–1322 (MSVPMGMMNT…ISLNHSMAIM (208 aa)) is interaction with Klp10A. An ALMS motif region spans residues 1190 to 1309 (SLQDQLQLAR…FNKRLKSRVA (120 aa)).

It belongs to the ALMS1 family. In terms of assembly, interacts (via C-terminus) with Klp10A. Interacts with SAK. Expressed in all germlines, including germline stem cells and spermatogonia.

The protein localises to the cytoplasm. It is found in the cytoskeleton. The protein resides in the microtubule organizing center. Its subcellular location is the centrosome. It localises to the centriole. Its function is as follows. In asymmetrically dividing germline stem cells (GSCs), plays a critical role in ensuring centrosome duplication, which is essential for the production of centrosomes and centrioles in all downstream germ cells. Might recruit SAK for daughter centriole duplication. In Drosophila melanogaster (Fruit fly), this protein is Centrosome-associated protein Alms1a.